The primary structure comprises 245 residues: Acetoacetate decarboxylase (245 aa).

K116 functions as the Schiff-base intermediate with acetoacetate in the catalytic mechanism.

This sequence belongs to the ADC family.

The catalysed reaction is acetoacetate + H(+) = acetone + CO2. Its function is as follows. Catalyzes the conversion of acetoacetate to acetone and carbon dioxide. This chain is Acetoacetate decarboxylase, found in Acidiphilium cryptum (strain JF-5).